We begin with the raw amino-acid sequence, 334 residues long: Ferrochelatase (334 aa).

Fe cation-binding residues include H207 and E288.

It belongs to the ferrochelatase family.

The protein localises to the cytoplasm. The enzyme catalyses heme b + 2 H(+) = protoporphyrin IX + Fe(2+). The protein operates within porphyrin-containing compound metabolism; protoheme biosynthesis; protoheme from protoporphyrin-IX: step 1/1. In terms of biological role, catalyzes the ferrous insertion into protoporphyrin IX. The protein is Ferrochelatase of Helicobacter pylori (strain P12).